The sequence spans 165 residues: Calcium-binding protein H (165 aa).

EF-hand domains follow at residues 7–42 (QIEKDVEKIIGQYDGDKNGEVTINEAIEFFKRMGSK), 43–78 (YPEKCAIVLFKMYDLDNEGKISYDEIQEEIFKRYQD), 88–123 (YFQDDIEAFLLRYDKNRDNRIDFKELEQCFESIGSD), and 124–159 (HPKENANHIFTEIDKNRDGYLTIAEIKNYCRNTIRS). Residues Asp-20, Asp-22, Asn-24, Glu-26, Glu-31, Asp-56, Asp-58, Glu-60, Lys-62, Glu-67, Asp-101, Asn-103, Asp-105, Arg-107, Glu-112, Asp-137, Asn-139, Asp-141, Tyr-143, and Glu-148 each coordinate Ca(2+).

The chain is Calcium-binding protein H (cbpH) from Dictyostelium discoideum (Social amoeba).